We begin with the raw amino-acid sequence, 529 residues long: Bifunctional purine biosynthesis protein PurH (529 aa).

The MGS-like domain maps to 1-148 (MQQRRPIRRA…KNHKDVAIVV (148 aa)).

The protein belongs to the PurH family.

The catalysed reaction is (6R)-10-formyltetrahydrofolate + 5-amino-1-(5-phospho-beta-D-ribosyl)imidazole-4-carboxamide = 5-formamido-1-(5-phospho-D-ribosyl)imidazole-4-carboxamide + (6S)-5,6,7,8-tetrahydrofolate. It catalyses the reaction IMP + H2O = 5-formamido-1-(5-phospho-D-ribosyl)imidazole-4-carboxamide. Its pathway is purine metabolism; IMP biosynthesis via de novo pathway; 5-formamido-1-(5-phospho-D-ribosyl)imidazole-4-carboxamide from 5-amino-1-(5-phospho-D-ribosyl)imidazole-4-carboxamide (10-formyl THF route): step 1/1. The protein operates within purine metabolism; IMP biosynthesis via de novo pathway; IMP from 5-formamido-1-(5-phospho-D-ribosyl)imidazole-4-carboxamide: step 1/1. In Pectobacterium atrosepticum (strain SCRI 1043 / ATCC BAA-672) (Erwinia carotovora subsp. atroseptica), this protein is Bifunctional purine biosynthesis protein PurH.